The primary structure comprises 573 residues: Sulfite reductase [NADPH] hemoprotein beta-component (573 aa).

Residues Cys438, Cys444, Cys483, and Cys487 each coordinate [4Fe-4S] cluster. Cys487 contacts siroheme.

This sequence belongs to the nitrite and sulfite reductase 4Fe-4S domain family. Alpha(8)-beta(8). The alpha component is a flavoprotein, the beta component is a hemoprotein. The cofactor is siroheme. It depends on [4Fe-4S] cluster as a cofactor.

It carries out the reaction hydrogen sulfide + 3 NADP(+) + 3 H2O = sulfite + 3 NADPH + 4 H(+). It functions in the pathway sulfur metabolism; hydrogen sulfide biosynthesis; hydrogen sulfide from sulfite (NADPH route): step 1/1. Functionally, component of the sulfite reductase complex that catalyzes the 6-electron reduction of sulfite to sulfide. This is one of several activities required for the biosynthesis of L-cysteine from sulfate. This Geobacillus thermodenitrificans (strain NG80-2) protein is Sulfite reductase [NADPH] hemoprotein beta-component.